The sequence spans 606 residues: Phosphoenolpyruvate carboxykinase [GTP] (606 aa).

Residues R79 and 218 to 220 (YGG) each bind substrate. Residues K227 and H247 each contribute to the Mn(2+) site. S269 contacts substrate. Residue 270–275 (ACGKTN) participates in GTP binding. C271 is a catalytic residue. Position 294 (D294) interacts with Mn(2+). 384 to 386 (NSR) serves as a coordination point for substrate. Residues R386, R417, and 512 to 515 (FGEN) each bind GTP.

Belongs to the phosphoenolpyruvate carboxykinase [GTP] family. In terms of assembly, monomer. Mn(2+) serves as cofactor.

The protein resides in the cytoplasm. It catalyses the reaction oxaloacetate + GTP = phosphoenolpyruvate + GDP + CO2. It participates in carbohydrate biosynthesis; gluconeogenesis. Catalyzes the conversion of oxaloacetate (OAA) to phosphoenolpyruvate (PEP), the rate-limiting step in the metabolic pathway that produces glucose from lactate and other precursors derived from the citric acid cycle. This chain is Phosphoenolpyruvate carboxykinase [GTP], found in Corynebacterium jeikeium (strain K411).